A 1909-amino-acid chain; its full sequence is Nck-associated protein 5 (1909 aa).

The stretch at 71-253 (EKLIHELEEE…DLEQQNRTLS (183 aa)) forms a coiled coil. 8 disordered regions span residues 351–370 (SSYTWHDGKNLRKRQSSQNW), 736–819 (EEDT…LMEP), 855–997 (PLFE…KKPS), 1026–1469 (SSSF…APLS), 1486–1509 (KGQVQTKPTSVEAKQKPGPSFASW), 1541–1592 (GFGN…RTPQ), 1725–1750 (FPLPDSGNRSTGRYLCQPDSPEDAEP), and 1763–1885 (SMRA…DYGD). A compositionally biased stretch (basic and acidic residues) spans 736-748 (EEDTEKNIPKDNV). Composition is skewed to polar residues over residues 753 to 789 (RVSTESFSSRTVTQNPQQQKLVKPTHNISCQSNSRSS), 950 to 965 (APSSTKSETRVPSETA), 981 to 990 (VISSNPATTE), and 1066 to 1084 (PRISPSTHEPLEMTSSKSV). Low complexity-rich tracts occupy residues 1110–1131 (SPSSQVSSSSSSSSPAKSHNSP) and 1178–1187 (ASKSSVAVNK). Basic and acidic residues predominate over residues 1241 to 1250 (DGRDGVDNRS). Over residues 1300-1325 (QIITNTAERGNSLTRQNSSTESSPNK) the composition is skewed to polar residues. The span at 1339-1366 (GRPSGHPSSGKGSLGSSGSFSSQHGSPS) shows a compositional bias: low complexity. Positions 1428–1446 (PGRTQHPSTFETSSTSKLE) are enriched in polar residues. The segment covering 1454–1466 (ASATATDAVSSEA) has biased composition (low complexity). Composition is skewed to basic and acidic residues over residues 1547-1560 (LKSERKKEKKKPEL) and 1567-1576 (ELIKDTKSAD). Positions 1869-1878 (YSASGGSNSD) are enriched in polar residues.

In terms of assembly, interacts with the SH3-containing region of the adapter protein NCK. In terms of tissue distribution, expressed in fetal and adult brain, leukocytes and fetal fibroblasts.

The polypeptide is Nck-associated protein 5 (NCKAP5) (Homo sapiens (Human)).